The following is a 500-amino-acid chain: Lysine--tRNA ligase (500 aa).

Residues Glu410 and Glu417 each coordinate Mg(2+).

This sequence belongs to the class-II aminoacyl-tRNA synthetase family. As to quaternary structure, homodimer. The cofactor is Mg(2+).

The protein resides in the cytoplasm. It carries out the reaction tRNA(Lys) + L-lysine + ATP = L-lysyl-tRNA(Lys) + AMP + diphosphate. The polypeptide is Lysine--tRNA ligase (Shewanella piezotolerans (strain WP3 / JCM 13877)).